Consider the following 769-residue polypeptide: Serine/threonine-protein kinase PLK4 (769 aa).

In terms of domain architecture, Protein kinase spans 14-267; it reads YEVQHLLGKG…LEAVLCHPFM (254 aa). Residues 20–28 and Lys-43 each bind ATP; that span reads LGKGGFATV. Asp-138 (proton acceptor) is an active-site residue. The Cryptic POLO box 1 (CPB1) domain occupies 381–498; the sequence is EDRISVPPLN…ARFVGLVKSK (118 aa). A Cryptic POLO box 2 (CPB2) domain is found at 499 to 602; the sequence is TPKVTYFSTL…GRRPITDVQP (104 aa). The region spanning 660 to 739 is the POLO box domain; sequence PIKRINVPEI…IPNIQLKLKT (80 aa).

It belongs to the protein kinase superfamily. Ser/Thr protein kinase family. CDC5/Polo subfamily. Homodimer. Interacts with Alms1a. In terms of processing, ubiquitinated by the SCF-slmb ubiquitin ligase complex; leading to its degradation by the proteasome during interphase and regulating centriole number and ensuring the block to centriole reduplication. In terms of tissue distribution, expressed in testis (at protein level).

It localises to the cytoplasm. Its subcellular location is the cytoskeleton. It is found in the microtubule organizing center. The protein localises to the centrosome. The protein resides in the centriole. The enzyme catalyses L-seryl-[protein] + ATP = O-phospho-L-seryl-[protein] + ADP + H(+). It catalyses the reaction L-threonyl-[protein] + ATP = O-phospho-L-threonyl-[protein] + ADP + H(+). Functionally, serine/threonine-protein kinase that plays a central role in centriole duplication. Able to trigger procentriole formation on the surface of the mother centriole cylinder, using mother centriole as a platform, leading to the recruitment of centriole biogenesis proteins such as Sas-6. When overexpressed, it is able to induce centrosome amplification through the simultaneous generation of multiple procentrioles adjoining each parental centriole during S phase. Centrosome amplification following overexpression can initiate tumorigenesis, highlighting the importance of centrosome regulation in cancers. This chain is Serine/threonine-protein kinase PLK4 (SAK), found in Drosophila melanogaster (Fruit fly).